The primary structure comprises 107 residues: MELKFAHIIVFFLLATSFETLMARKESDGPEVIQLLKEFQCKGKLRWPELIGVPTKLAKGIIEKENSLISNVHILLNGSPVTLDIRCDRVRLFDNILGYVVDIPVVG.

An N-terminal signal peptide occupies residues 1 to 23; sequence MELKFAHIIVFFLLATSFETLMA. Positions 24-36 are excised as a propeptide; sequence RKESDGPEVIQLL.

It belongs to the protease inhibitor I13 (potato type I serine protease inhibitor) family.

The polypeptide is Proteinase inhibitor 1 (Solanum tuberosum (Potato)).